The chain runs to 214 residues: Phosphoheptose isomerase (214 aa).

Residues 51 to 209 (IASTFEDGGK…IDLVERLLGY (159 aa)) form the SIS domain. 66–68 (NGG) contacts substrate. Residues His75 and Glu79 each coordinate Zn(2+). Residues Glu79, 110 to 111 (ND), 136 to 138 (STS), Ser141, and Gln189 contribute to the substrate site. Zn(2+) is bound by residues Gln189 and His197.

It belongs to the SIS family. GmhA subfamily. The cofactor is Zn(2+).

It is found in the cytoplasm. The enzyme catalyses 2 D-sedoheptulose 7-phosphate = D-glycero-alpha-D-manno-heptose 7-phosphate + D-glycero-beta-D-manno-heptose 7-phosphate. The protein operates within carbohydrate biosynthesis; D-glycero-D-manno-heptose 7-phosphate biosynthesis; D-glycero-alpha-D-manno-heptose 7-phosphate and D-glycero-beta-D-manno-heptose 7-phosphate from sedoheptulose 7-phosphate: step 1/1. In terms of biological role, catalyzes the isomerization of sedoheptulose 7-phosphate in D-glycero-D-manno-heptose 7-phosphate. This Chlorobium limicola (strain DSM 245 / NBRC 103803 / 6330) protein is Phosphoheptose isomerase.